Here is a 422-residue protein sequence, read N- to C-terminus: Transcription termination factor Rho (422 aa).

Positions 52-127 (EVGGDGVLEV…TRVTKINFDD (76 aa)) constitute a Rho RNA-BD domain. ATP is bound by residues 173 to 178 (GKGQRG), 185 to 190 (RTGKTV), and Arg216.

The protein belongs to the Rho family. As to quaternary structure, homohexamer. The homohexamer assembles into an open ring structure.

Its function is as follows. Facilitates transcription termination by a mechanism that involves Rho binding to the nascent RNA, activation of Rho's RNA-dependent ATPase activity, and release of the mRNA from the DNA template. The sequence is that of Transcription termination factor Rho from Cereibacter sphaeroides (strain ATCC 17023 / DSM 158 / JCM 6121 / CCUG 31486 / LMG 2827 / NBRC 12203 / NCIMB 8253 / ATH 2.4.1.) (Rhodobacter sphaeroides).